Consider the following 766-residue polypeptide: Serine/threonine-protein kinase B-raf (766 aa).

Gly residues predominate over residues M1–E13. A disordered region spans residues M1–A38. A2 is subject to N-acetylalanine. S151 carries the post-translational modification Phosphoserine. An RBD domain is found at P155–L227. A Phorbol-ester/DAG-type zinc finger spans residues T234–C280. The Zn(2+) site is built by H235, C248, C251, C261, C264, H269, C272, and C280. Positions A308 to D454 are disordered. Over residues S314–P341 the composition is skewed to low complexity. Phosphoserine is present on S333. The span at P348–S363 shows a compositional bias: basic and acidic residues. S365 is modified (phosphoserine; by SGK1). A Phosphothreonine; by autocatalysis modification is found at T373. Position 396 is a phosphothreonine (T396). S399 is subject to Phosphoserine. The residue at position 401 (T401) is a Phosphothreonine. The segment covering Q423–S447 has biased composition (basic and acidic residues). S446 and S447 each carry phosphoserine. Positions I457 to L717 constitute a Protein kinase domain. ATP-binding positions include I463–V471 and K483. The active-site Proton acceptor is the D576. Residue K578 forms a Glycyl lysine isopeptide (Lys-Gly) (interchain with G-Cter in ubiquitin) linkage. Position 671 is an omega-N-methylarginine; by PRMT5 (R671). Phosphoserine occurs at positions 729 and 750. The residue at position 753 (T753) is a Phosphothreonine; by MAPK1.

It belongs to the protein kinase superfamily. TKL Ser/Thr protein kinase family. RAF subfamily. As to quaternary structure, monomer. Homodimer. Heterodimerizes with RAF1, and the heterodimer possesses a highly increased kinase activity compared to the respective homodimers or monomers. Heterodimerization is mitogen-regulated and enhanced by 14-3-3 proteins. MAPK1/ERK2 activation can induce a negative feedback that promotes the dissociation of the heterodimer by phosphorylating BRAF at Thr-753. Heterodimerizes (via N-terminus) with KSR1 (via N-terminus) or KSR2 (via N-terminus) in a MAP2K1-dependent manner. Interacts with MAP2K1 and MAP2K2. Found in a complex with at least BRAF, HRAS, MAP2K1, MAPK3 and RGS14. Interacts with RIT1. Interacts (via N-terminus) with RGS14 (via RBD domains); the interaction mediates the formation of a ternary complex with RAF1, a ternary complex inhibited by GNAI1. Interacts with DGKH. Interacts with PRMT5. Interacts with KSR2. Interacts with AKAP13, MAP2K1 and KSR1. Identified in a complex with AKAP13, MAP2K1 and KSR1. Interacts with FNIP1 and FNIP2. It depends on Zn(2+) as a cofactor. In terms of processing, phosphorylation at Ser-365 by SGK1 inhibits its activity. Phosphorylation at Thr-753 by MAPK1. Dephosphorylation of Ser-365 by the SHOC2-MRAS-PP1c (SMP) complex consisting of SHOC2, GTP-bound M-Ras/MRAS and the catalytic subunit of protein phosphatase 1 (PPP1CA, PPP1CB or PPP1CC); this relieves inactivation and stimulates kinase activity. Post-translationally, methylation at Arg-671 decreases stability and kinase activity. Ubiquitinated by RNF149; which leads to proteasomal degradation. Polyubiquitinated at Lys-578 in response to EGF. Brain and testis.

The protein resides in the nucleus. It is found in the cytoplasm. It localises to the cell membrane. The enzyme catalyses L-seryl-[protein] + ATP = O-phospho-L-seryl-[protein] + ADP + H(+). It catalyses the reaction L-threonyl-[protein] + ATP = O-phospho-L-threonyl-[protein] + ADP + H(+). Its activity is regulated as follows. In quiescent cells, maintained in an inactive state via an intramolecular interaction between the protein kinase and N-terminal domains. Following mitogen-mediated cell activation, binds via its RGB domain to active HRAS (GTP-bound) which releases the inhibitory intramolecular interaction between the two domains. This allows the MAP2K1-mediated dimerization of KSR1 or KSR2, and BRAF which activates BRAF. Its function is as follows. Protein kinase involved in the transduction of mitogenic signals from the cell membrane to the nucleus. Phosphorylates MAP2K1, and thereby activates the MAP kinase signal transduction pathway. Phosphorylates PFKFB2. May play a role in the postsynaptic responses of hippocampal neurons. This Homo sapiens (Human) protein is Serine/threonine-protein kinase B-raf.